Here is a 693-residue protein sequence, read N- to C-terminus: MA3 DOMAIN-CONTAINING TRANSLATION REGULATORY FACTOR 2 (693 aa).

Positions 25 to 60 (SLDPLPQANMAEDLTKSRRHSPIKVEGSEETWGVED) are disordered. In terms of domain architecture, MI 1 spans 90–211 (EYKKKATVIV…PPAFLKKQMK (122 aa)). Positions 241-248 (EKRWGGTD) match the Nuclear localization signal 1 motif. MI domains lie at 254–375 (DVKA…SLSA), 389–510 (VFKD…EVLN), and 560–681 (EVKE…EDSQ). The Nuclear localization signal 2 signature appears at 430–437 (VKYLITLA). The interval 673 to 693 (ESFASEDSQSKKQNGSSSSSG) is disordered. The span at 683–693 (KKQNGSSSSSG) shows a compositional bias: low complexity.

This sequence belongs to the PDCD4 family. In terms of assembly, binds to EIF4A1. The association with ribosomes is modulated by cellular energy status and TOR activity. In terms of tissue distribution, mostly expressed in reproductive tissues, such as flower buds and flowers, and, to a lower extent, in vegetative tissues, such as leaves, roots and stems.

The protein resides in the nucleus. The protein localises to the cytoplasm. It is found in the cytosol. In terms of biological role, involved in target of rapamycin (TOR)-regulated translation control, especially under energy-deficient conditions. This chain is MA3 DOMAIN-CONTAINING TRANSLATION REGULATORY FACTOR 2, found in Arabidopsis thaliana (Mouse-ear cress).